The following is a 258-amino-acid chain: Acetylglutamate kinase (258 aa).

Residues 41–42 (GG), Arg-63, and Asn-156 contribute to the substrate site.

It belongs to the acetylglutamate kinase family. ArgB subfamily.

The protein resides in the cytoplasm. It catalyses the reaction N-acetyl-L-glutamate + ATP = N-acetyl-L-glutamyl 5-phosphate + ADP. It participates in amino-acid biosynthesis; L-arginine biosynthesis; N(2)-acetyl-L-ornithine from L-glutamate: step 2/4. Its function is as follows. Catalyzes the ATP-dependent phosphorylation of N-acetyl-L-glutamate. The polypeptide is Acetylglutamate kinase (Geobacillus kaustophilus (strain HTA426)).